A 733-amino-acid chain; its full sequence is Submandibular gland protein C (733 aa).

A signal peptide spans 1-20; sequence MKLILLYLAVVLCFVGKARS. Residues 48–91 are disordered; sequence KSSGGSKDYNLSDGGKSNSRKNLSPATGGSATQQSNLDDSHAPN. N57 carries an N-linked (GlcNAc...) asparagine glycan. Over residues 62 to 84 the composition is skewed to polar residues; it reads GKSNSRKNLSPATGGSATQQSNL. N141 and N187 each carry an N-linked (GlcNAc...) asparagine glycan. Disordered stretches follow at residues 172-204, 249-330, 369-450, and 496-733; these read GQQAAASGGSKHNVENSSLSTGSATSNKGADKP, LTED…NSSN, and SVTE…PSVA. Residues 186–199 are compositionally biased toward polar residues; that stretch reads ENSSLSTGSATSNK. Residues 256–270 are compositionally biased toward low complexity; that stretch reads TSTSASVSGDSSTSS. Over residues 300 to 318 the composition is skewed to polar residues; that stretch reads GSKQNVEDSTLSTGSATSN. A glycan (N-linked (GlcNAc...) asparagine) is linked at N327. Residues 376-390 are compositionally biased toward low complexity; it reads TSTSASVSGDSSTSS. Polar residues predominate over residues 420–438; it reads GSKQNVEDSTLSTGSATSN. 3 N-linked (GlcNAc...) asparagine glycosylation sites follow: N447, N514, and N528. Composition is skewed to polar residues over residues 496–516 and 525–535; these read SVTEASQSAERPNAQSSNNLS and NPTNGSSSASS. Over residues 538–552 the composition is skewed to basic and acidic residues; that stretch reads KPYEEGMRKLLKFLE. Composition is skewed to low complexity over residues 563–574 and 609–619; these read SVSGMSSESSRS and SSNSSTGSATS. N-linked (GlcNAc...) asparagine glycosylation occurs at N611. Residues 654–665 show a composition bias toward gly residues; sequence GFNGPEGVGENN. The segment covering 677–701 has biased composition (low complexity); it reads GSKSDSGSHNLSSGSGSRSNVSTGG. N-linked (GlcNAc...) asparagine glycosylation is found at N686 and N696. Residues 722 to 733 are compositionally biased toward polar residues; sequence TGKTQSGSPSVA.

N-glycosylated. In terms of tissue distribution, detected in terminal tubule cells of the submandibular gland (at protein level). Expressed in submandibular salivary glands of 3-day-old males but not adults. Expression in adult submandibular glands is restricted to females. Isoform 5 is expressed in both 3-day-old and adult sublingual glands.

The protein localises to the secreted. The polypeptide is Submandibular gland protein C (Muc19) (Mus musculus (Mouse)).